We begin with the raw amino-acid sequence, 667 residues long: DNA ligase (667 aa).

Residues 32 to 36 (DSEYD), 81 to 82 (SL), and glutamate 110 contribute to the NAD(+) site. Lysine 112 functions as the N6-AMP-lysine intermediate in the catalytic mechanism. Positions 133, 167, 283, and 307 each coordinate NAD(+). Positions 401, 404, 419, and 424 each coordinate Zn(2+). The BRCT domain maps to 586 to 667 (EGHPDFKDKT…FVQKQNEIEG (82 aa)).

It belongs to the NAD-dependent DNA ligase family. LigA subfamily. The cofactor is Mg(2+). Requires Mn(2+) as cofactor.

It carries out the reaction NAD(+) + (deoxyribonucleotide)n-3'-hydroxyl + 5'-phospho-(deoxyribonucleotide)m = (deoxyribonucleotide)n+m + AMP + beta-nicotinamide D-nucleotide.. Functionally, DNA ligase that catalyzes the formation of phosphodiester linkages between 5'-phosphoryl and 3'-hydroxyl groups in double-stranded DNA using NAD as a coenzyme and as the energy source for the reaction. It is essential for DNA replication and repair of damaged DNA. This is DNA ligase from Staphylococcus saprophyticus subsp. saprophyticus (strain ATCC 15305 / DSM 20229 / NCIMB 8711 / NCTC 7292 / S-41).